The primary structure comprises 76 residues: Omega-conotoxin-like TxO1 (76 aa).

The N-terminal stretch at 1–22 (MKLTCVVIVAVLFLTVWTFATA) is a signal peptide. A propeptide spanning residues 23 to 50 (DDSGNGLEKLFSNAHHEMKNPEASKLNE) is cleaved from the precursor. Disulfide bonds link Cys52–Cys67, Cys59–Cys70, and Cys66–Cys75.

The protein belongs to the conotoxin O1 superfamily. Expressed by the venom duct.

It localises to the secreted. Omega-conotoxins act at presynaptic membranes, they bind and block voltage-gated calcium channels (Cav). This chain is Omega-conotoxin-like TxO1, found in Conus textile (Cloth-of-gold cone).